We begin with the raw amino-acid sequence, 74 residues long: Kappa-scoloptoxin(07)-Ssm2c (74 aa).

An N-terminal signal peptide occupies residues 1 to 19 (MLVFYAPLFVSIFSNTVMG). The propeptide occupies 20 to 41 (ATIDKPIPKPILREAIEKIAVN).

It belongs to the scoloptoxin-07 family. In terms of processing, contains 3 disulfide bonds. As to expression, expressed by the venom gland.

Its subcellular location is the secreted. Functionally, inhibits voltage-gated potassium channels. This Scolopendra mutilans (Chinese red-headed centipede) protein is Kappa-scoloptoxin(07)-Ssm2c.